The chain runs to 467 residues: MATEYALRMGDGKRVYLTKEKIVSEIEAGTADAADLGEIPALSANEMDKLAEILMMPGKTVSVEQGMEIPVTHDIGTIRLDGDQGNSGVGIPSSRLVGCMTHERAFGADTMELGHIDYSFKPVKPVVSNECQAMEVCQQNMVIPLFYGAMPNMGLYYTPDGPFENPGDLMKAFKIQEAWESMEHAAEHLTRDTVWVMQKLFASGADGVNFDTTGAAGDGDMYGTLHAIEALRKEFPDMYIEAGMAGECVLGMHGNLQYDGVTLAGLWPHQQAPLVAKAGANVFGPVCNTNTSKTSAWNLARAVTFMKAAVEASPIPCHVDMGMGVGGIPMLETPPIDAVTRASKAMVEIAGVDGIOIGVGDPLGMPIAHIMASGMTGMRAAGDLVARMEFSKNMRIGEAKEYVAKKLGVDKMDLVDEHVMRELREELDIGIITSVPGAAKGIAAKMNIEKLLDIKINSCNLFRKQIA.

Residue pyrrolysine 356 is a non-standard amino acid, pyrrolysine.

It belongs to the dimethylamine methyltransferase family. In terms of assembly, may form homotetramers or homopentamers.

It carries out the reaction Co(I)-[dimethylamine-specific corrinoid protein] + dimethylamine + H(+) = methyl-Co(III)-[dimethylamine-specific corrinoid protein] + methylamine. It functions in the pathway one-carbon metabolism; methanogenesis from dimethylamine. Its function is as follows. Catalyzes the transfer of a methyl group from dimethylamine to the corrinoid cofactor of MtbC. The major or perhaps only DMA methyltransferase expressed under inducing conditions. This chain is Dimethylamine methyltransferase MtbB1, found in Methanosarcina barkeri.